The sequence spans 132 residues: Small ribosomal subunit protein uS8 (132 aa).

This sequence belongs to the universal ribosomal protein uS8 family. In terms of assembly, part of the 30S ribosomal subunit. Contacts proteins S5 and S12.

One of the primary rRNA binding proteins, it binds directly to 16S rRNA central domain where it helps coordinate assembly of the platform of the 30S subunit. The chain is Small ribosomal subunit protein uS8 from Psychrobacter arcticus (strain DSM 17307 / VKM B-2377 / 273-4).